The chain runs to 608 residues: Chaperone protein HtpG (608 aa).

Residues 1 to 332 form an a; substrate-binding region; it reads MQFQTEVNQL…VEDLPLNVSR (332 aa). Residues 333–536 form a b region; the sequence is EILQENQILK…KNKLDFAMQQ (204 aa). Residues 537 to 608 form a c region; the sequence is LLKQMGQEQN…LTKIINKAFS (72 aa).

Belongs to the heat shock protein 90 family. Homodimer.

The protein resides in the cytoplasm. Molecular chaperone. Has ATPase activity. The chain is Chaperone protein HtpG from Campylobacter jejuni subsp. doylei (strain ATCC BAA-1458 / RM4099 / 269.97).